The primary structure comprises 515 residues: MASPNRHWPSMFRSNLACNIQQQQQPDMNGNGSSSSSFLLSPPTAATTGNGKPSLLSSGCEEGTRNPEPKPRWNPRPEQIRILEGIFNSGMVNPPRDEIRRIRLQLQEYGQVGDANVFYWFQNRKSRTKNKLRAAGHHHHHGRAAALPRASAPPSTNIVLPSAAAAAPLTPPRRHLLAATSSSSSSSDRSSGSSKSVKPAAAALLTSAAIDLFSPAPAPTTQLPACQLYYHSHPTPLARDDQLITSPESSSLLLQWPASQYMPATELGGVLGSSSHTQTPAAITTHPSTISPSVLLGLCNEALGQHQQETMDDMMITCSNPSKVFDHHSMDDMSCTDAVSAVNRDDEKARLGLLHYGIGVTAAANPAPHHHHHHHHLASPVHDAVSAADASTAAMILPFTTTAAATPSNVVATSSALADQLQGLLDAGLLQGGAAPPPPSATVVAVSRDDETMCTKTTSYSFPATMHLNVKMFGEAAVLVRYSGEPVLVDDSGVTVEPLQQGATYYVLVSEEAVH.

Polar residues-rich tracts occupy residues 23-32 (QQQPDMNGNG) and 44-57 (TAATTGNGKPSLLS). 3 disordered regions span residues 23 to 76 (QQQP…WNPR), 130 to 156 (NKLRAAGHHHHHGRAAALPRASAPPST), and 176 to 195 (LLAATSSSSSSSDRSSGSSK). Residues 62-71 (EGTRNPEPKP) are compositionally biased toward basic and acidic residues. Positions 68 to 132 (EPKPRWNPRP…NRKSRTKNKL (65 aa)) form a DNA-binding region, homeobox; WUS-type. Positions 130 to 143 (NKLRAAGHHHHHGR) are enriched in basic residues. Composition is skewed to low complexity over residues 144–156 (AAALPRASAPPST) and 177–195 (LAATSSSSSSSDRSSGSSK).

Belongs to the WUS homeobox family.

The protein resides in the nucleus. In terms of biological role, transcription factor which may be involved in developmental processes. The sequence is that of WUSCHEL-related homeobox 12 (WOX12) from Oryza sativa subsp. japonica (Rice).